Consider the following 565-residue polypeptide: Tetratricopeptide repeat protein 39A (565 aa).

TPR repeat units follow at residues 271–304 (AIFL…QQVW), 461–494 (CLIQ…EKKL), and 502–535 (PNAL…YKVY).

Belongs to the TTC39 family.

In Danio rerio (Zebrafish), this protein is Tetratricopeptide repeat protein 39A (ttc39a).